The following is a 216-amino-acid chain: 2,5-diamino-6-ribosylamino-4(3H)-pyrimidinone 5'-phosphate reductase (216 aa).

Residues Thr-51, Asp-55, 79–82 (SMAR), Val-126, and 148–151 (GSTL) contribute to the NADP(+) site.

Belongs to the HTP reductase family. As to quaternary structure, homodimer.

It carries out the reaction 2,5-diamino-6-(1-D-ribitylamino)pyrimidin-4(3H)-one 5'-phosphate + NADP(+) = 2,5-diamino-6-(1-D-ribosylamino)pyrimidin-4(3H)-one 5'-phosphate + NADPH + H(+). The enzyme catalyses 2,5-diamino-6-(1-D-ribitylamino)pyrimidin-4(3H)-one 5'-phosphate + NAD(+) = 2,5-diamino-6-(1-D-ribosylamino)pyrimidin-4(3H)-one 5'-phosphate + NADH + H(+). The protein operates within cofactor biosynthesis; riboflavin biosynthesis. Its function is as follows. Catalyzes an early step in riboflavin biosynthesis, the NADPH-dependent reduction of the ribose side chain of 2,5-diamino-6-ribosylamino-4(3H)-pyrimidinone 5'-phosphate, yielding 2,5-diamino-6-ribitylamino-4(3H)-pyrimidinone 5'-phosphate. This chain is 2,5-diamino-6-ribosylamino-4(3H)-pyrimidinone 5'-phosphate reductase, found in Methanothermobacter thermautotrophicus (strain ATCC 29096 / DSM 1053 / JCM 10044 / NBRC 100330 / Delta H) (Methanobacterium thermoautotrophicum).